We begin with the raw amino-acid sequence, 316 residues long: Membrane protein UL148 (316 aa).

Residues 1-20 form the signal peptide; that stretch reads MLRLLFTLVLLALYGPSVDA. Residues 286–308 traverse the membrane as a helical segment; that stretch reads FIVQYLNTLLITMMAAIWARVLI.

As to quaternary structure, interacts with host SEL1L.

The protein localises to the host endoplasmic reticulum membrane. Its function is as follows. Chaperone protein that plays an important role in HCMV tropism. Cooperates with UL116 to regulate the abundance of gH-gL complexes in virion. Favors the incorporation of gL into virions once UL116 has regulated the early folding steps of virion assembly. Interacts with the host ERAD machinery and slows gO decay which would otherwise be constitutively degraded. Reorganizes the host endoplasmic reticulum and activates the unfolded protein response. Additionally, plays a role in the evasion of antiviral immune response by down-regulating cell surface expression of host CD58. Mechanistically, interacts with host CD58 and retains its immature form intracellularly. The capacity to cause endoplasmic reticulum reorganization and the intracellular retention of host CD58 are functionally independent properties. This Human cytomegalovirus (strain Merlin) (HHV-5) protein is Membrane protein UL148 (UL148).